A 941-amino-acid polypeptide reads, in one-letter code: MSDHSTFADRHIGLDSQAVATMLAVIGVDSLDDLAVKAVPAGILDTLTDTGAAPGLDSLPPAASEAEALAELRALADANTVAVSMIGQGYYDTHTPPVLLRNIIENPAWYTAYTPYQPEISQGRLEALLNFQTLVTDLTGLEIANASMLDEGTAAAEAMTLMHRAARGPVKRVVVDADVFTQTAAVLATRAKPLGIEIVTADLRAGLPDGEFFGVIAQLPGASGRITDWSALVQQAHDRGALVAVGADLLALTLIAPPGEIGADVAFGTTQRFGVPMGFGGPHAGYLAVHAKHARQLPGRLVGVSVDSDGTPAYRLALQTREQHIRRDKATSNICTAQVLLAVLAAMYASYHGAGGLTAIARRVHAHAEAIAGALGDALVHDKYFDTVLARVPGRADEVLARAKANGINLWRVDADHVSVACDEATTDTHVAVVLDAFGVAAAAPAHTDIATRTSEFLTHPAFTQYRTETSMMRYLRALADKDIALDRSMIPLGSCTMKLNAAAEMESITWPEFGRQHPFAPASDTAGLRQLVADLQSWLVLITGYDAVSLQPNAGSQGEYAGLLAIHEYHASRGEPHRDICLIPSSAHGTNAASAALAGMRVVVVDCHDNGDVDLDDLRAKVGEHAERLSALMITYPSTHGVYEHDIAEICAAVHDAGGQVYVDGANLNALVGLARPGKFGGDVSHLNLHKTFCIPHGGGGPGVGPVAVRAHLAPFLPGHPFAPELPKGYPVSSAPYGSASILPITWAYIRMMGAEGLRAASLTAITSANYIARRLDEYYPVLYTGENGMVAHECILDLRGITKLTGITVDDVAKRLADYGFHAPTMSFPVAGTLMVEPTESESLAEVDAFCEAMIGIRAEIDKVGAGEWPVDDNPLRGAPHTAQCLLASDWDHPYTREQAAYPLGTAFRPKVWPAVRRIDGAYGDRNLVCSCPPVEAFA.

Lys-692 bears the N6-(pyridoxal phosphate)lysine mark.

This sequence belongs to the GcvP family. In terms of assembly, the glycine cleavage system is composed of four proteins: P, T, L and H. It depends on pyridoxal 5'-phosphate as a cofactor.

It carries out the reaction N(6)-[(R)-lipoyl]-L-lysyl-[glycine-cleavage complex H protein] + glycine + H(+) = N(6)-[(R)-S(8)-aminomethyldihydrolipoyl]-L-lysyl-[glycine-cleavage complex H protein] + CO2. Its function is as follows. The glycine cleavage system catalyzes the degradation of glycine. The P protein binds the alpha-amino group of glycine through its pyridoxal phosphate cofactor; CO(2) is released and the remaining methylamine moiety is then transferred to the lipoamide cofactor of the H protein. The chain is Glycine dehydrogenase (decarboxylating) from Mycobacterium tuberculosis (strain ATCC 25177 / H37Ra).